Reading from the N-terminus, the 219-residue chain is MMTHDVGVRELGLIEYRAAWQAMQHFTNTRDADSGDEIWLLQHPPVFTQGQAGKAEHLLFPGEIPVVQVDRGGQVTYHGPGQLVGYLLLDVRRLGIGVRELVSRIERSLIDLLAGYDVEAVAKPDAPGVYVGGAKIASLGLRIRNGRSFHGLALNVDMDLEPFRRINPCGYAGLPMTQLRDLIGPIDISEVADRLRDHLVRQLGYAQQKTLAGGIEAYE.

A BPL/LPL catalytic domain is found at 32-207 (ADSGDEIWLL…HLVRQLGYAQ (176 aa)). Residues 71-78 (RGGQVTYH), 138-140 (SLG), and 151-153 (GLA) each bind substrate. The Acyl-thioester intermediate role is filled by Cys-169.

It belongs to the LipB family.

The protein resides in the cytoplasm. It catalyses the reaction octanoyl-[ACP] + L-lysyl-[protein] = N(6)-octanoyl-L-lysyl-[protein] + holo-[ACP] + H(+). It participates in protein modification; protein lipoylation via endogenous pathway; protein N(6)-(lipoyl)lysine from octanoyl-[acyl-carrier-protein]: step 1/2. Catalyzes the transfer of endogenously produced octanoic acid from octanoyl-acyl-carrier-protein onto the lipoyl domains of lipoate-dependent enzymes. Lipoyl-ACP can also act as a substrate although octanoyl-ACP is likely to be the physiological substrate. This Stutzerimonas stutzeri (strain A1501) (Pseudomonas stutzeri) protein is Octanoyltransferase.